The sequence spans 351 residues: Protein Tex24 (351 aa).

Disordered stretches follow at residues 69–101 (PSTA…PSLS), 117–144 (PEDR…AQGK), and 275–298 (EKVK…PKSM). The span at 73 to 83 (HGKRKPGHLPR) shows a compositional bias: basic residues. Residues 275 to 285 (EKVKPSSHDMH) show a composition bias toward basic and acidic residues.

In terms of tissue distribution, specific to testis, where it is expressed in spermatogonia.

It is found in the nucleus. Its function is as follows. Nuclear factor which might have a role in spermatogenesis. This chain is Protein Tex24, found in Mus musculus (Mouse).